A 475-amino-acid polypeptide reads, in one-letter code: UDP-N-acetylmuramate--L-alanine ligase (475 aa).

118–124 serves as a coordination point for ATP; sequence GTHGKTT.

The protein belongs to the MurCDEF family.

It localises to the cytoplasm. The catalysed reaction is UDP-N-acetyl-alpha-D-muramate + L-alanine + ATP = UDP-N-acetyl-alpha-D-muramoyl-L-alanine + ADP + phosphate + H(+). It functions in the pathway cell wall biogenesis; peptidoglycan biosynthesis. Cell wall formation. The sequence is that of UDP-N-acetylmuramate--L-alanine ligase from Paracoccus denitrificans (strain Pd 1222).